A 551-amino-acid chain; its full sequence is Chaperonin GroEL (551 aa).

ATP contacts are provided by residues 30 to 33 (TLGP), lysine 51, 87 to 91 (DGTTT), glycine 415, 479 to 481 (NAA), and aspartate 495.

This sequence belongs to the chaperonin (HSP60) family. As to quaternary structure, forms a cylinder of 14 subunits composed of two heptameric rings stacked back-to-back. Interacts with the co-chaperonin GroES.

The protein localises to the cytoplasm. The catalysed reaction is ATP + H2O + a folded polypeptide = ADP + phosphate + an unfolded polypeptide.. Functionally, together with its co-chaperonin GroES, plays an essential role in assisting protein folding. The GroEL-GroES system forms a nano-cage that allows encapsulation of the non-native substrate proteins and provides a physical environment optimized to promote and accelerate protein folding. The protein is Chaperonin GroEL of Acidithiobacillus ferrooxidans (strain ATCC 23270 / DSM 14882 / CIP 104768 / NCIMB 8455) (Ferrobacillus ferrooxidans (strain ATCC 23270)).